We begin with the raw amino-acid sequence, 93 residues long: CRISPR-associated endoribonuclease Cas2 1 (93 aa).

D8 serves as a coordination point for Mg(2+).

Belongs to the CRISPR-associated endoribonuclease Cas2 protein family. In terms of assembly, homodimer, forms a heterotetramer with a Cas1 homodimer. The cofactor is Mg(2+).

Functionally, CRISPR (clustered regularly interspaced short palindromic repeat), is an adaptive immune system that provides protection against mobile genetic elements (viruses, transposable elements and conjugative plasmids). CRISPR clusters contain sequences complementary to antecedent mobile elements and target invading nucleic acids. CRISPR clusters are transcribed and processed into CRISPR RNA (crRNA). Functions as a ssRNA-specific endoribonuclease. Involved in the integration of spacer DNA into the CRISPR cassette. The chain is CRISPR-associated endoribonuclease Cas2 1 from Chloroflexus aurantiacus (strain ATCC 29366 / DSM 635 / J-10-fl).